The following is a 1757-amino-acid chain: MATDSGEPASTEDSEKPDGVSFENRAARAVAPLTVEARIKEKYSTFSASGENIERKRFFRKSVEMTEDDKVAESSRRDERKAATNISRVDKVPTNVLRGGQEVKYEQCSKATSESSKDCFKEKTEKEMEEEAEMKAVATSPSGRFLKFDIELGRGAFKTVYKGLDTETWVEVAWCELQDRKLTKAEQQRFKEEAEMLKGLQHPNIVRFYDSWESTLKGKKCIVLVTELMTSGTLKTYLKRFKVMKPKVLRSWCRQILKGLQFLHTRTPPIIHRDLKCDNIFITGPTGSVKIGDLGLATLMRTSFAKSVIGTPEFMAPEMYEEHYDESVDVYAFGMCMLEMATSEYPYSECQNAAQIYRKVTSGIKPASFNKVTDPEVKEIIEGCIRQNKSERLSIKDLLNHAFFAEDTGLRVELAEEDDCSNSSLALRLWVEDPKKLKGKHKDNEAIEFSFNLEADTPEEVAYEMVKSGFFHESDSKAVAKSIRDRVTLIKKIREKKPAGCLEERRDSQCKYVRNVLPQQQTATLQPTPGPHTAAEYEETEVDQHVRQQFLQGKPQQQSSSVRGDTSSEPTAGPVLHSDTSSHPTVAYSSNQTTSSQEQPKLTQSPVLPVVQGQSSVMPIYAAGVGVVSQSQISPLTIQKVSQIKPVSQPIGAEQQATLQNPDFVRSLNQDVTSVKENTNNPDTPSGNGKQDRNKQRRASCPRPEKGTKFQLTVLQVSVSGDNMVECQLETHNNKMVTFKFDVDGDAPEDIADYMVEDNFVLENEKEKFVEELRAIVGQAQEILHVHSAVEKSIGVDSVALESNSNQTGSSEQVLINSASTQTSNESAPQSSPVGRWRFCINQTIKNREAQSPPSLQPSMAMVPGLHPFPSSRNTSNQAISQNTVFTIENNPGHRELFTSKLDHKDVVDGKIGEHASIETEQSSISYQVEDDRQIMTPATDNSNYSAALVCPVPGECEALTSQAGMFMPTYPNQQAAVLADVHIAYPGESVPIGGNAALTSVLVSSDQKPQSLSVQQPTIDAEFISKEGETTVNTETSSPKAVIATQTPGFEPAVILPATILESDGERPPKMEFADNRIKTLDEKLRNLLYQEHSISSICPESQKDTQSIDSPFSSSAEDILSYSMPEVIAISHCGIQDSPAQSPNFQQTGSKILSNVAASQPAHISVFKKDLNVITSVPSELCLHEMSPDASLPGDPEAYPAAVSSDGTIHLQTGGGYFGLSFTCPSLKNPISRKSWTRKLKSWAYRLRQSTSFFKRSKVRQVETEDKRSAIASDPIPLTREFSSDTRALSRCKAMSGSFQRGRFQVITVPQQQPVKMMSFGKDHRPPFNKTTVQSSEQALTFAEAAVSQLIEVEPAMPTHKASVSSRKLRTLYETFKEDKGDPEQGDIVSYSTACETSVSSVATEKNVTSTTEVSVQSGSEPLDKEKNESTPGKQTCTNEFSATLAGNRKSVTKTRPEGDQYLPLREEQAYAQTQNSLFYSPSSPMSSDNESEIEDEDLKVELQRLREKHIQEVVSLQTQQNKELQELYERLRATKDNKAQSSEVPLSPASPRRPRSFKSKLRSRPQSMTHSDNLVVKDALGVESNTVSCQQSPASKKGMFTDDLHKLVDDWTRETVGHFPSKPSLNQLKQSQQKSEAENWNKSCESTPSTMGYTSNWISSLSQIRGAAPTSLPQGLPLPSFHGPLASYGMPHVCQYNAVGAAGYPVQWVGISGPAQQSVVLPTQSGGLFQPGMNLQSFPAPPVQNPASIPPGPK.

The segment at 1 to 25 (MATDSGEPASTEDSEKPDGVSFENR) is disordered. S62 carries the phosphoserine modification. Residues 66–82 (TEDDKVAESSRRDERKA) are compositionally biased toward basic and acidic residues. Residues 66-85 (TEDDKVAESSRRDERKAATN) are disordered. Residues 146–404 (LKFDIELGRG…IKDLLNHAFF (259 aa)) enclose the Protein kinase domain. ATP is bound by residues 226 to 229 (TELM) and K276. Catalysis depends on D293, which acts as the Proton acceptor. Residues S303 and S307 each carry the phosphoserine; by autocatalysis modification. Residues 536–546 (EYEETEVDQHV) form an interaction with KLHL3 region. T540 bears the Phosphothreonine mark. 3 stretches are compositionally biased toward polar residues: residues 551-570 (LQGK…SSEP), 578-604 (SDTS…KLTQ), and 674-689 (SVKE…SGNG). 2 disordered regions span residues 551 to 604 (LQGK…KLTQ) and 674 to 705 (SVKE…PRPE). Residue S1039 is modified to Phosphoserine. Residues 1404–1422 (VATEKNVTSTTEVSVQSGS) are compositionally biased toward polar residues. Disordered regions lie at residues 1404-1440 (VATE…QTCT), 1479-1498 (SLFY…EIED), and 1536-1574 (ATKD…MTHS). Over residues 1479–1491 (SLFYSPSSPMSSD) the composition is skewed to low complexity. Phosphoserine occurs at positions 1550 and 1553. Positions 1555 to 1566 (RRPRSFKSKLRS) are enriched in basic residues. S1595 is subject to Phosphoserine. Disordered stretches follow at residues 1621-1650 (HFPS…CEST) and 1734-1757 (PGMN…PGPK). Over residues 1624 to 1637 (SKPSLNQLKQSQQK) the composition is skewed to low complexity. The span at 1641–1650 (ENWNKSCEST) shows a compositional bias: polar residues. The span at 1742–1757 (PAPPVQNPASIPPGPK) shows a compositional bias: pro residues.

It belongs to the protein kinase superfamily. Ser/Thr protein kinase family. WNK subfamily. As to quaternary structure, interacts with WNK1 and WNK4. Mg(2+) is required as a cofactor. Post-translationally, autophosphorylated at Ser-303 and Ser-307, promoting its activity. Phosphorylation at Thr-540 prevents interaction with KLHL3 and subsequent ubiquitination and degradation by the BCR(KLHL3) complex. Ubiquitinated by the BCR(KLHL2) complex, leading to its degradation. Ubiquitinated by the BCR(KLHL3) complex, leading to its degradation. In terms of tissue distribution, expressed in pancreatic duct.

It localises to the cytoplasm. It catalyses the reaction L-seryl-[protein] + ATP = O-phospho-L-seryl-[protein] + ADP + H(+). It carries out the reaction L-threonyl-[protein] + ATP = O-phospho-L-threonyl-[protein] + ADP + H(+). Its activity is regulated as follows. Activated in response to hyperosmotic stress: cell shrinkage promotes formation of a membraneless compartment that concentrates WNK3 with its substrates, OXSR1/OSR1 and STK39/SPAK. Activation requires autophosphorylation of Ser-307 and, to a lower extent, Ser-303. Autophosphorylation and subsequent activation is inhibited by increases in intracellular ionic strength: Cl(-) potently inhibits WNK3 kinase activity via direct binding. Also inhibited by K(+) ions. Kinase activity is inhibited by WNK4. In terms of biological role, serine/threonine-protein kinase component of the WNK3-SPAK/OSR1 kinase cascade, which plays an important role in the regulation of electrolyte homeostasis and regulatory volume increase in response to hyperosmotic stress. WNK3 mediates regulatory volume increase in response to hyperosmotic stress by acting as a molecular crowding sensor, which senses cell shrinkage and mediates formation of a membraneless compartment by undergoing liquid-liquid phase separation. The membraneless compartment concentrates WNK3 with its substrates, OXSR1/OSR1 and STK39/SPAK, promoting WNK3-dependent phosphorylation and activation of downstream kinases OXSR1/OSR1 and STK39/SPAK. Following activation, OXSR1/OSR1 and STK39/SPAK catalyze phosphorylation of ion cotransporters SLC12A1/NKCC2, SLC12A2/NKCC1, SLC12A3/NCC, SLC12A4/KCC1, SLC12A5/KCC2 or SLC12A6/KCC3, regulating their activity. Phosphorylation of Na-K-Cl cotransporters SLC12A2/NKCC1 and SLC12A2/NKCC1 promote their activation and ion influx; simultaneously, phosphorylation of K-Cl cotransporters SLC12A4/KCC1, SLC12A5/KCC2 and SLC12A6/KCC3 inhibits its activity, blocking ion efflux. Phosphorylates WNK4, possibly regulating the activity of SLC12A3/NCC. May also phosphorylate NEDD4L. Also acts as a scaffold protein independently of its protein kinase activity: negatively regulates cell membrane localization of various transporters and channels, such as KCNJ1 and SLC26A9. Increases Ca(2+) influx mediated by TRPV5 and TRPV6 by enhancing their membrane expression level via a kinase-dependent pathway. The polypeptide is Serine/threonine-protein kinase WNK3 (Mus musculus (Mouse)).